A 372-amino-acid chain; its full sequence is MPHQHILMLFGLLPVATNISTWWNFGSMLLTCSALQIMTGFFLAVHYTANINLAFSSIIHNTRDVPHGWMMQNLHAIGASMFFICIYIHMARGLYYGSYLNKETWLSGTTLLIMLMATAFFGYVLPWGQMSFWAATVITNLLTAIPYLGTTMTTWLWGGFAINDPTLTRFFALHFILPFGIISLSSLHIMLLHEEGSSNPLGTNSDIDKIPFHPYHTYKDLFMISSMIMIMLLTISFLPDIFNDPENFFKANLLTTPQHIKPEWYFLFAYGILRSIPNKLGGALALAMSIMILLTVPFTHTANTRSMTFRPFMQLMFWTLMATFIIITWTATKPVEAPYTTISQVASTLYFMFFMSNLILGWLENKIMKTQL.

4 helical membrane-spanning segments follow: residues 25–45 (FGSM…FLAV), 69–90 (WMMQ…YIHM), 105–125 (WLSG…GYVL), and 170–190 (FFAL…LHIM). Residues His75 and His89 each coordinate heme b. His174 and His188 together coordinate heme b. An a ubiquinone-binding site is contributed by His193. The next 4 membrane-spanning stretches (helical) occupy residues 218-238 (YKDL…ISFL), 280-300 (LGGA…PFTH), 312-332 (FMQL…WTAT), and 339-358 (YTTI…MSNL).

Belongs to the cytochrome b family. As to quaternary structure, the cytochrome bc1 complex contains 3 respiratory subunits (MT-CYB, CYC1 and UQCRFS1), 2 core proteins (UQCRC1 and UQCRC2) and probably 6 low-molecular weight proteins. Heme b is required as a cofactor.

It is found in the mitochondrion inner membrane. Component of the ubiquinol-cytochrome c reductase complex (complex III or cytochrome b-c1 complex) that is part of the mitochondrial respiratory chain. The b-c1 complex mediates electron transfer from ubiquinol to cytochrome c. Contributes to the generation of a proton gradient across the mitochondrial membrane that is then used for ATP synthesis. This is Cytochrome b (MT-CYB) from Sanzinia madagascariensis (Madagascar tree boa).